A 214-amino-acid chain; its full sequence is MTLALTAEKIERNRFTGLKVENSTFHHCDFSGADLTGTEFIGCQFYDRENQKGCNFSRAILKDAIFKNCDLSMADFRNASALGIEIRGCRAQGADFRGTSFMNMITTRTWFCSAYITNTNLSYANFSKAVLEKCELWENRWMGTQVLGATFSGSDLSGGEFSSFDWRAANVTHCDLTNSELGDLDVRGVDLQGVKLDSYQVSLIMERLGVAIIG.

2 consecutive Pentapeptide repeat domains span residues Ser23–Asn103 and Ile116–Val189.

This sequence belongs to the pentapeptide repeat protein family.

Its function is as follows. Confers reduced sensitivity to the fluoroquinolone antibiotic ciprofloxacin (five-fold increase in minimum inhibitory concentration) when expressed in E.coli. The chain is Quinolone resistance pentapeptide repeat protein QnrB96 from Scandinavium goeteborgense.